Consider the following 511-residue polypeptide: Maturase K (511 aa).

The protein belongs to the intron maturase 2 family. MatK subfamily.

The protein resides in the plastid. It localises to the chloroplast. In terms of biological role, usually encoded in the trnK tRNA gene intron. Probably assists in splicing its own and other chloroplast group II introns. The protein is Maturase K of Oryza nivara (Indian wild rice).